The following is a 107-amino-acid chain: Phosphoribosyl-ATP pyrophosphatase (107 aa).

This sequence belongs to the PRA-PH family.

The protein localises to the cytoplasm. The catalysed reaction is 1-(5-phospho-beta-D-ribosyl)-ATP + H2O = 1-(5-phospho-beta-D-ribosyl)-5'-AMP + diphosphate + H(+). It functions in the pathway amino-acid biosynthesis; L-histidine biosynthesis; L-histidine from 5-phospho-alpha-D-ribose 1-diphosphate: step 2/9. In Neisseria meningitidis serogroup A / serotype 4A (strain DSM 15465 / Z2491), this protein is Phosphoribosyl-ATP pyrophosphatase (hisE).